The sequence spans 75 residues: Small ribosomal subunit protein bS16c (75 aa).

It belongs to the bacterial ribosomal protein bS16 family.

Its subcellular location is the plastid. The protein localises to the chloroplast. This is Small ribosomal subunit protein bS16c from Cyanidium caldarium (Red alga).